Reading from the N-terminus, the 376-residue chain is N-acetyldiaminopimelate deacetylase (376 aa).

The active site involves aspartate 69. Catalysis depends on glutamate 128, which acts as the Proton acceptor.

Belongs to the peptidase M20A family. N-acetyldiaminopimelate deacetylase subfamily.

It catalyses the reaction N-acetyl-(2S,6S)-2,6-diaminopimelate + H2O = (2S,6S)-2,6-diaminopimelate + acetate. It functions in the pathway amino-acid biosynthesis; L-lysine biosynthesis via DAP pathway; LL-2,6-diaminopimelate from (S)-tetrahydrodipicolinate (acetylase route): step 3/3. In terms of biological role, catalyzes the conversion of N-acetyl-diaminopimelate to diaminopimelate and acetate. This chain is N-acetyldiaminopimelate deacetylase, found in Streptococcus pneumoniae (strain JJA).